The sequence spans 2061 residues: Putative PWWP domain-containing DNA repair factor 4 (2061 aa).

Disordered stretches follow at residues 101-211 (TNLG…SRAR), 382-408 (ALGR…RSSV), 541-586 (TPGT…GDGS), 668-694 (PATL…GDGS), 864-910 (PTPG…SERS), 1046-1072 (PGTM…GDRS), 1159-1182 (ALHG…RGDS), 1205-1383 (KAIA…RDDK), 1521-1548 (PGAL…DSSP), and 1602-1726 (KKGK…KLAN). Composition is skewed to basic and acidic residues over residues 133–153 (PRED…KREN) and 162–173 (ESKRALRDDRSQ). Residues 397 to 408 (TPGTLQGNRSSV) are compositionally biased toward polar residues. Positions 1051–1061 (GDSSTARTATA) are enriched in polar residues. The segment covering 1364-1373 (DSSQVHTTIA) has biased composition (polar residues). The segment covering 1639 to 1648 (LKEETQDSRP) has biased composition (basic and acidic residues). The segment covering 1656 to 1665 (PESSPFSGNI) has biased composition (polar residues). The region spanning 1756–1817 (RGTMVWFKFQ…KHLDCKEKEK (62 aa)) is the PWWP domain.

It belongs to the PWWP3A family.

In Homo sapiens (Human), this protein is Putative PWWP domain-containing DNA repair factor 4.